The chain runs to 574 residues: Ribonuclease Y (574 aa).

A helical membrane pass occupies residues 1-21 (MSLLDLVLLLLVLGLGGVLLL). The KH domain occupies 264 to 327 (AVTVVPIPSD…EIARMALEEL (64 aa)). The 94-residue stretch at 390–483 (VLKHSIQVAH…VAAADALSAA (94 aa)) folds into the HD domain.

Belongs to the RNase Y family.

The protein resides in the cell membrane. Its function is as follows. Endoribonuclease that initiates mRNA decay. The polypeptide is Ribonuclease Y (Thermus thermophilus (strain ATCC 27634 / DSM 579 / HB8)).